A 438-amino-acid chain; its full sequence is Fibrous sheath-interacting protein 1 (438 aa).

Residues 1-111 (MSMDIIKGNL…PEHSDDPKLE (111 aa)) are disordered. The segment covering 18–32 (SSSRSRPGSRSSNGS) has biased composition (low complexity). The span at 53 to 72 (SGKEGHTSDSRVEERRKISD) shows a compositional bias: basic and acidic residues. Phosphoserine occurs at positions 71, 88, and 89. Residues 131-157 (LAKRRIREKEIKKQGLEMRIKLWEELK) are a coiled coil. The interval 354-390 (SQSNKGDMEHDSNEERNTEPTPGEKILRDNKEQRDRE) is disordered. Composition is skewed to basic and acidic residues over residues 359 to 371 (GDMEHDSNEERNT) and 378 to 390 (KILRDNKEQRDRE).

This sequence belongs to the FSIP1 family.

The sequence is that of Fibrous sheath-interacting protein 1 (Fsip1) from Rattus norvegicus (Rat).